Reading from the N-terminus, the 309-residue chain is uncharacterized protein (309 aa).

2 disordered regions span residues 1 to 94 (IGEV…RQQI) and 286 to 309 (HTRNSKFHPPAKNTPPPLEDPPRG). Residues 30 to 43 (PAQPPSPAPTPSRT) are compositionally biased toward pro residues. Residues 58–67 (RSKTPDKRSA) are compositionally biased toward basic and acidic residues. Pro residues predominate over residues 297–309 (KNTPPPLEDPPRG).

This is an uncharacterized protein from Homo sapiens (Human).